The following is a 474-amino-acid chain: Trehalose-6-phosphate synthase (474 aa).

R10 contributes to the D-glucose 6-phosphate binding site. 22-23 contacts UDP-alpha-D-glucose; that stretch reads GG. D-glucose 6-phosphate-binding residues include Y77 and D131. UDP-alpha-D-glucose-binding residues include R263 and K268. R301 provides a ligand contact to D-glucose 6-phosphate. Residues F340 and 366-370 each bind UDP-alpha-D-glucose; that span reads LVAKE.

It belongs to the glycosyltransferase 20 family. As to quaternary structure, homotetramer.

The catalysed reaction is D-glucose 6-phosphate + UDP-alpha-D-glucose = alpha,alpha-trehalose 6-phosphate + UDP + H(+). It participates in glycan biosynthesis; trehalose biosynthesis. Functionally, probably involved in the osmoprotection via the biosynthesis of trehalose. Catalyzes the transfer of glucose from UDP-alpha-D-glucose (UDP-Glc) to D-glucose 6-phosphate (Glc-6-P) to form trehalose-6-phosphate. Acts with retention of the anomeric configuration of the UDP-sugar donor. This Escherichia coli O9:H4 (strain HS) protein is Trehalose-6-phosphate synthase.